Reading from the N-terminus, the 433-residue chain is uncharacterized protein (433 aa).

It localises to the virion. This is an uncharacterized protein from Acanthamoeba polyphaga (Amoeba).